Here is a 439-residue protein sequence, read N- to C-terminus: RNA polymerase II-associated protein RBA50 (439 aa).

Disordered regions lie at residues 1-35 and 49-79; these read MDLL…GFPE and LREK…SEAK. Residues 15-30 are compositionally biased toward polar residues; the sequence is SVESNDNGTLSTNNCG.

Belongs to the RPAP1 family.

Its subcellular location is the cytoplasm. Its function is as follows. Forms an interface between the RNA polymerase II enzyme and chaperone/scaffolding proteins, suggesting that it is required to connect RNA polymerase II to regulators of protein complex formation. The chain is RNA polymerase II-associated protein RBA50 (RBA50) from Saccharomyces cerevisiae (strain ATCC 204508 / S288c) (Baker's yeast).